A 299-amino-acid chain; its full sequence is Prohibitin-2 (299 aa).

An N-acetylalanine modification is found at alanine 2. Residues 19 to 49 (MGTALKLLLGAGAVAYGIRESVFTVEGGHRA) are necessary for transcriptional repression. Phosphotyrosine is present on tyrosine 128. Position 147 is an N6-acetyllysine (lysine 147). Residues 150–174 (ASQLITQRAQVSLLIRRELTERAKD) form a necessary for transcriptional repression region. Serine 151 bears the Phosphoserine mark. Positions 190 to 238 (SREYTAAVEAKQVAQQEAQRAQFLVEKAKQEQRQKIVQAEGEAEAARML) form a coiled coil. N6-acetyllysine is present on residues lysine 200, lysine 250, and lysine 262.

The protein belongs to the prohibitin family. The mitochondrial prohibitin complex consists of two subunits (PHB1 and PHB2), assembled into a membrane-associated ring-shaped supercomplex of approximately 1 mDa. Interacts with ESR1, HDAC1 and HDAC5. Interacts with ZNF703. Interacts with STOML2. Interacts with ARFGEF3. Interacts with SPHK2. Interacts with COX4I1; the interaction associates PHB2 with COX. Interacts with MAP1LC3B (membrane-bound form LC3-II); the interaction is direct and upon mitochondrial depolarization and proteasome-dependent outer membrane rupture. Interacts with IGFBP6 (via C-terminal domain). Interacts with CLPB. Interacts with CD86 (via cytoplasmic domain); the interactions increases after priming with CD40. Interacts with AFG3L2. Interacts with DNAJC19. Interacts with AKT2; this interaction may be important for myogenic differentiation. Phosphorylated. Tyrosine phosphorylation is indirectly stimulated by IGFBP6.

The protein resides in the mitochondrion inner membrane. It is found in the cytoplasm. Its subcellular location is the nucleus. The protein localises to the cell membrane. Functionally, protein with pleiotropic attributes mediated in a cell-compartment- and tissue-specific manner, which include the plasma membrane-associated cell signaling functions, mitochondrial chaperone, and transcriptional co-regulator of transcription factors and sex steroid hormones in the nucleus. In the mitochondria, together with PHB, forms large ring complexes (prohibitin complexes) in the inner mitochondrial membrane (IMM) and functions as a chaperone protein that stabilizes mitochondrial respiratory enzymes and maintains mitochondrial integrity in the IMM, which is required for mitochondrial morphogenesis, neuronal survival, and normal lifespan. The prohibitin complex, with DNAJC19, regulates cardiolipin remodeling and the protein turnover of OMA1 in a cardiolipin-binding manner. Also regulates cytochrome-c oxidase assembly (COX) and mitochondrial respiration. Binding to sphingoid 1-phosphate (SPP) modulates its regulator activity. Has a key role of mitophagy receptor involved in targeting mitochondria for autophagic degradation. Involved in mitochondrial-mediated antiviral innate immunity, activates RIG-I-mediated signal transduction and production of IFNB1 and pro-inflammatory cytokine IL6. Its function is as follows. In the nucleus, serves as transcriptional co-regulator. Acts as a mediator of transcriptional repression by nuclear hormone receptors via recruitment of histone deacetylases. Functions as an estrogen receptor (ER)-selective coregulator that potentiates the inhibitory activities of antiestrogens and represses the activity of estrogens. Competes with NCOA1 for modulation of ER transcriptional activity. In terms of biological role, in the plasma membrane, is involved in IGFBP6-induced cell migration. Cooperates with CD86 to mediate CD86-signaling in B lymphocytes that regulates the level of IgG1 produced through the activation of distal signaling intermediates. Upon CD40 engagement, required to activate NF-kappa-B signaling pathway via phospholipase C and protein kinase C activation. The protein is Prohibitin-2 (PHB2) of Bos taurus (Bovine).